The sequence spans 283 residues: Pantothenate synthetase (283 aa).

30–37 (MGTLHDGH) serves as a coordination point for ATP. His-37 serves as the catalytic Proton donor. Gln-61 serves as a coordination point for (R)-pantoate. Gln-61 is a binding site for beta-alanine. 148-151 (GLKD) is an ATP binding site. Gln-154 serves as a coordination point for (R)-pantoate. 185-188 (MSSR) is a binding site for ATP.

This sequence belongs to the pantothenate synthetase family. As to quaternary structure, homodimer.

The protein localises to the cytoplasm. The enzyme catalyses (R)-pantoate + beta-alanine + ATP = (R)-pantothenate + AMP + diphosphate + H(+). Its pathway is cofactor biosynthesis; (R)-pantothenate biosynthesis; (R)-pantothenate from (R)-pantoate and beta-alanine: step 1/1. Functionally, catalyzes the condensation of pantoate with beta-alanine in an ATP-dependent reaction via a pantoyl-adenylate intermediate. This chain is Pantothenate synthetase, found in Leptospira biflexa serovar Patoc (strain Patoc 1 / Ames).